The sequence spans 46 residues: Defensin Tk-AMP-D5 (46 aa).

Disulfide bonds link C3/C46, C14/C34, C20/C40, and C24/C42.

Its function is as follows. Plant defense peptide. This is Defensin Tk-AMP-D5 from Triticum kiharae (Wheat).